We begin with the raw amino-acid sequence, 147 residues long: Secreted RxLR effector protein BLN04 (147 aa).

Positions 1–23 (MATMRRICFLFVFNLAVATSTQG) are cleaved as a signal peptide. A dEER motif is present at residues 58–61 (SEER). Residues 117–137 (VYIYTILFLSIPIILGVAMYI) traverse the membrane as a helical segment.

It belongs to the RxLR effector family. Interacts with host transcription factor NAC069.

The protein resides in the secreted. Its subcellular location is the host membrane. In terms of biological role, secreted effector that inhibits stress-induced relocalization of the transcription factor NAC069 to the nucleus, thus affecting its broad role in abiotic and biotic stress responses. The sequence is that of Secreted RxLR effector protein BLN04 from Bremia lactucae (Lettuce downy mildew).